Consider the following 544-residue polypeptide: Protein angel homolog 2 (544 aa).

The protein belongs to the CCR4/nocturin family.

The chain is Protein angel homolog 2 (Angel2) from Mus musculus (Mouse).